Reading from the N-terminus, the 128-residue chain is Small ribosomal subunit protein uS11 (128 aa).

Belongs to the universal ribosomal protein uS11 family. Part of the 30S ribosomal subunit. Interacts with proteins S7 and S18. Binds to IF-3.

In terms of biological role, located on the platform of the 30S subunit, it bridges several disparate RNA helices of the 16S rRNA. Forms part of the Shine-Dalgarno cleft in the 70S ribosome. This Aster yellows witches'-broom phytoplasma (strain AYWB) protein is Small ribosomal subunit protein uS11.